A 366-amino-acid chain; its full sequence is MKQPYLLLTPGPLSTTASVKDAMQIDYCTWDSDYRHVTETIRQQILAMAQANPENYTTVLLQGSGSFGVEATIGTAVPRTDATLMIAINGAYGHRISQIAEYYDIPHIDVVFNEDEAVDPVRIEATLADHPEITHFATVHSETTTGILNPIEALMPIMHEHGIVTIIDAMSSLGGVPISIDELDCDYLISSANKCVQGVPGFAFIIAKQATLAHTADNARSLCLDLYDQWQAMTKQPGKWRFTSPTHVVHAFAQALIELQAEGGVTPRYQRYRASQQLLSDGLQALGFELVIDPAIQGPIITSFKYPNVDFDFADFYQFIKQRGFVIYPGKVSNIPSFRIGTIGDVDTTDIQRLLTIIGDYQQLHR.

Position 194 is an N6-(pyridoxal phosphate)lysine (Lys194).

The protein belongs to the class-V pyridoxal-phosphate-dependent aminotransferase family. PhnW subfamily. Homodimer. It depends on pyridoxal 5'-phosphate as a cofactor.

It carries out the reaction (2-aminoethyl)phosphonate + pyruvate = phosphonoacetaldehyde + L-alanine. In terms of biological role, involved in phosphonate degradation. The protein is 2-aminoethylphosphonate--pyruvate transaminase of Lactiplantibacillus plantarum (strain ATCC BAA-793 / NCIMB 8826 / WCFS1) (Lactobacillus plantarum).